We begin with the raw amino-acid sequence, 300 residues long: Zinc finger protein RME1 (300 aa).

The segment covering Gln80–Glu90 has biased composition (polar residues). Residues Gln80–Glu100 are disordered. C2H2-type zinc fingers lie at residues Tyr178 to Glu199, Cys206 to His234, and Leu256 to His281.

Its subcellular location is the nucleus. Functionally, involved in the control of meiosis. Represses the transcription of the IME1 gene thereby inhibiting cells from entering meiosis. But also activates the CLN2 gene thus promoting mitosis. The chain is Zinc finger protein RME1 (RME1) from Saccharomyces cerevisiae (strain ATCC 204508 / S288c) (Baker's yeast).